A 170-amino-acid polypeptide reads, in one-letter code: Small ribosomal subunit protein uS5 (170 aa).

The S5 DRBM domain occupies 11 to 74; the sequence is ILEKLVHINR…ETARRVLIHV (64 aa).

Belongs to the universal ribosomal protein uS5 family. Part of the 30S ribosomal subunit. Contacts proteins S4 and S8.

Functionally, with S4 and S12 plays an important role in translational accuracy. Located at the back of the 30S subunit body where it stabilizes the conformation of the head with respect to the body. This is Small ribosomal subunit protein uS5 from Pelagibacter ubique (strain HTCC1062).